The sequence spans 286 residues: Pyridoxal kinase PdxY (286 aa).

Ser-8 is a substrate binding site. Positions 110 and 147 each coordinate ATP. Asp-223 contributes to the substrate binding site.

It belongs to the pyridoxine kinase family. PdxY subfamily. In terms of assembly, homodimer. Requires Mg(2+) as cofactor.

The catalysed reaction is pyridoxal + ATP = pyridoxal 5'-phosphate + ADP + H(+). Its pathway is cofactor metabolism; pyridoxal 5'-phosphate salvage; pyridoxal 5'-phosphate from pyridoxal: step 1/1. Pyridoxal kinase involved in the salvage pathway of pyridoxal 5'-phosphate (PLP). Catalyzes the phosphorylation of pyridoxal to PLP. This Granulibacter bethesdensis (strain ATCC BAA-1260 / CGDNIH1) protein is Pyridoxal kinase PdxY.